The chain runs to 290 residues: uncharacterized protein (290 aa).

5 helical membrane passes run 10–27, 32–54, 69–91, 100–117, and 121–143; these read FFVARLLVVLYLSTLLLI, VNYIAVGILSVYFLINVYVYFFS, ILVPAFVFFSKILYSIYALGVLI, VLAGIILLETYGLAFFYF, and YLLMISHFILFLALFFTSYNFEY. The stretch at 147–183 forms a coiled coil; sequence VGKERKRILKLKKNYHKLLKEFSNFEREKRMFSNLRK.

The protein localises to the cell membrane. This is an uncharacterized protein from Aquifex aeolicus (strain VF5).